A 445-amino-acid chain; its full sequence is Phosphoglucosamine mutase (445 aa).

Catalysis depends on serine 101, which acts as the Phosphoserine intermediate. Positions 101, 240, 242, and 244 each coordinate Mg(2+). Serine 101 carries the post-translational modification Phosphoserine.

It belongs to the phosphohexose mutase family. The cofactor is Mg(2+). In terms of processing, activated by phosphorylation.

The enzyme catalyses alpha-D-glucosamine 1-phosphate = D-glucosamine 6-phosphate. Its function is as follows. Catalyzes the conversion of glucosamine-6-phosphate to glucosamine-1-phosphate. The protein is Phosphoglucosamine mutase of Pseudomonas fluorescens (strain SBW25).